The chain runs to 81 residues: U10-myrmicitoxin-Mri1b (81 aa).

The signal sequence occupies residues 1-26; that stretch reads MRLSYISLTLAIIFVMAIVHAPETEA. Residues 27–52 constitute a propeptide that is removed on maturation; the sequence is KAYPEADAVAEAIAVGEADAVGVADP. V80 carries the post-translational modification Valine amide.

The protein belongs to the formicidae venom precursor-01 superfamily. In terms of tissue distribution, expressed by the venom gland.

The protein resides in the secreted. In terms of biological role, induces paralysis after injection into blowflies (L.caesar), and then death within 24 hours. May have antimicrobial properties, like most ant linear peptides. The polypeptide is U10-myrmicitoxin-Mri1b (Manica rubida (European giant red ant)).